Reading from the N-terminus, the 379-residue chain is Dihydroflavonol 4-reductase (379 aa).

Positions 56 and 175 each coordinate NADP(+).

This sequence belongs to the NAD(P)-dependent epimerase/dehydratase family. Dihydroflavonol-4-reductase subfamily. In terms of tissue distribution, expressed in both leaf and hypocotyl tissues.

It carries out the reaction a (2R,3S,4S)-leucoanthocyanidin + NADP(+) = a (2R,3R)-dihydroflavonol + NADPH + H(+). The enzyme catalyses (2S)-flavan-4-ol + NADP(+) = (2S)-flavanone + NADPH + H(+). Its pathway is pigment biosynthesis; anthocyanin biosynthesis. In terms of biological role, bifunctional enzyme involved in flavonoid metabolism. This chain is Dihydroflavonol 4-reductase, found in Solanum lycopersicum (Tomato).